A 125-amino-acid polypeptide reads, in one-letter code: Antitoxin MazE5 (125 aa).

Forms a complex with cognate toxin MazF5.

Functionally, antitoxin component of a type II toxin-antitoxin (TA) system. Upon expression in M.smegmatis neutralizes the effect of cognate toxin MazF5. The sequence is that of Antitoxin MazE5 (mazE5) from Mycobacterium tuberculosis (strain ATCC 25618 / H37Rv).